The chain runs to 667 residues: METNAVSLIYRCRVGERMSQHDTDGRVSVYAENIGGISQCDVTFKPGVNVLRGRNATGRTSLLNGLAGVLGGTAPVLKGDEQEAEVRLEFNGTTYDQQYTRKNGTVQAAGQPVTERRDLVDLFVCLTAENPARRAIVQDGNLRDVIMRPVDTGSIQRRIEDLQSERNRIGQRIRAIEDDLDQRTSLTSRKTTLVSDLDECDQEIEELRNQLEQFDADPEEAEEIEQALTSLEERKQELESITNRIRTQEDTREALRDEQSELQTEREAIETSEEELKRIETRLSELTSRERSLATTINDLSAIVDFNEDLVSNADSDLLRSGDAAESPVSKLNPMSETVECWTCGTEVERNRIAGRLDDLRDLVDEKRTERSEVQTEIEELRESQQELQEVIHRRDEIGQRLSEISSEIAQRDQTLESLSEEREDVHQRLSELEEFVSEREALQESELTEQYQQLSELEYQRGQLEEELSAVREELAELDRLENERDQLQAQQDEIQAELVSQRTQIRDLEESAITAFNDHMEEILDVLRYKNIARVWIERKEGAEFNSSHGGYRGGSATKFELHVVRETDEGRGYEDTVQSLSESEREVVGLVVALAGYLVHDVYEVIPMMLLDSLEAIDADRIAALVDYFADYAPYLIVALLPEDADALGGDETSVVPASFASEE.

2 coiled-coil regions span residues 153-295 (GSIQ…SLAT) and 355-517 (GRLD…AITA).

The protein belongs to the Sph1/Sph2 family.

Its subcellular location is the cytoplasm. May play a role in replication. The protein is Smc-like protein Sph2 (sph2) of Halobacterium salinarum (strain ATCC 29341 / DSM 671 / R1).